Consider the following 380-residue polypeptide: Guanine nucleotide-binding protein alpha-1 subunit (380 aa).

The segment at 1–25 (MGSSCSRSHSLSEAETTKNAKSADI) is disordered. Glycine 2 carries the N-myristoyl glycine lipid modification. Cysteine 5 carries the S-palmitoyl cysteine lipid modification. Residues 10–25 (SLSEAETTKNAKSADI) show a composition bias toward basic and acidic residues. Positions 38–380 (HIHKLLLLGA…ESMRRSREGT (343 aa)) constitute a G-alpha domain. The tract at residues 41 to 54 (KLLLLGAGESGKST) is G1 motif. 15 residues coordinate GTP: glutamate 49, serine 50, glycine 51, lysine 52, serine 53, threonine 54, aspartate 163, leucine 188, tyrosine 189, threonine 194, glycine 222, asparagine 288, lysine 289, aspartate 291, and alanine 356. Serine 53 is a binding site for Mg(2+). The interval 186–194 (DVLYARVRT) is G2 motif. Threonine 194 contacts Mg(2+). A G3 motif region spans residues 215–224 (YRLYDVGGQR). The tract at residues 284–291 (ILFLNKFD) is G4 motif. The tract at residues 354–359 (TTALDQ) is G5 motif.

This sequence belongs to the G-alpha family. In terms of assembly, g proteins are composed of 3 units; alpha, beta and gamma. The alpha chain contains the guanine nucleotide binding site. Interacts with COLD1. Mg(2+) serves as cofactor.

It localises to the cell membrane. Guanine nucleotide-binding proteins (G proteins) are involved as modulators or transducers in various transmembrane signaling systems. May function in a signal transduction pathway required for normal growth and development of internodes, leaves, panicles and seeds. Involved in gibberellin signal transduction. Involved in R gene-mediated disease resistance. Functions upstream of the small GTPase RAC1 in the early steps of signaling. Involved in brassinosteroid response. May not be a signaling molecule in BRI1-mediated perception or transduction. In Oryza sativa subsp. indica (Rice), this protein is Guanine nucleotide-binding protein alpha-1 subunit (GPA1).